An 831-amino-acid chain; its full sequence is MTISDSRRTFLKASAAAATASAAGIPLANGTAAEAQAISTGIRWDKAACRFCGTGCSVLVGTKEGRVVATQGDPDAPVNRGLNCIKGYFLSKIMYGEDRLTMPLLRKTNGVYDKNGTFEPVSWDEAFDVMAQKWKEALAKKGPTSVGMFGSGQWTVWEGYAAAKLMKAGFRSNNIDPNARHCMASAVVGFMRTFGIDEPMGCYDDFEHADTFVLWGSNMAEMHPILWSRLTDTRLTKPGSEVHVLSTYEHRSFELADNGMVFAPQTDLAILNYIANYIISTGRVNEDFMSKHVNITKTATDIGYGLRDEHALQQEAENPNSGKLEPISFDEYAASVAEYTVDKVSELSGVPAAQLEKLAEQYADPNRKVMSLWTMGFNQHTRGSWVNSLMYNVHLLVGKISEPGNSPFSLTGQPSACGTAREVGTFAHRLPADMVVMNDAHRALTEKKWNLPEGTIPAKPGFHAVLQHRKLKDGDLNAYWVQCNNNMQAAPNMNEEGYPGYRNPENFITVSDPYPTVTTMSADLILPTAMWVEKEGAYGNAERRTQFWRQQVKAPGEAKSDLWQLMEFSKRFTIEEVWGEELLAKMPEHRGKTMYDVLFANGKVDKYPLSETAEGFDNDESEHFGYYVQKGLFEEYAGFGRGKAHDLASFETYHQSRGLRWPVVDGQETLYRFREGYDPYVPEGEGVRFYGHSDGKAKIIYAPYEPAPEVPDAEFDLWLCTGRVLEHWHSGSMTRRVPELHRAYPAAVVYMHPEDAKARGLRRGQEINISTRRGDMLSRVETRGRNKVPQGLVFVPWFDEGQLINQLTLDATCPLSKETDFKKCACKVERA.

Residues 1–35 (MTISDSRRTFLKASAAAATASAAGIPLANGTAAEA) constitute a signal peptide (tat-type signal). One can recognise a 4Fe-4S Mo/W bis-MGD-type domain in the interval 42–98 (IRWDKAACRFCGTGCSVLVGTKEGRVVATQGDPDAPVNRGLNCIKGYFLSKIMYGED). Cysteine 49, cysteine 52, cysteine 56, and cysteine 84 together coordinate [4Fe-4S] cluster. Residues lysine 86, glutamine 153, asparagine 178, cysteine 182, 215–222 (WGSNMAEM), 246–250 (STYEH), 265–267 (QTD), methionine 375, glutamine 379, asparagine 485, 511–512 (SD), lysine 534, aspartate 561, and 721–730 (TGRVLEHWHS) each bind Mo-bis(molybdopterin guanine dinucleotide). Tryptophan 797 contributes to the substrate binding site. Residues asparagine 805 and lysine 822 each coordinate Mo-bis(molybdopterin guanine dinucleotide).

Belongs to the prokaryotic molybdopterin-containing oxidoreductase family. NasA/NapA/NarB subfamily. Component of the periplasmic nitrate reductase NapAB complex composed of NapA and NapB. The cofactor is [4Fe-4S] cluster. Mo-bis(molybdopterin guanine dinucleotide) serves as cofactor. In terms of processing, predicted to be exported by the Tat system. The position of the signal peptide cleavage has not been experimentally proven.

The protein localises to the periplasm. It carries out the reaction 2 Fe(II)-[cytochrome] + nitrate + 2 H(+) = 2 Fe(III)-[cytochrome] + nitrite + H2O. In terms of biological role, catalytic subunit of the periplasmic nitrate reductase complex NapAB. Receives electrons from NapB and catalyzes the reduction of nitrate to nitrite. The sequence is that of Periplasmic nitrate reductase from Dinoroseobacter shibae (strain DSM 16493 / NCIMB 14021 / DFL 12).